The chain runs to 309 residues: Ribosomal protein L11 methyltransferase (309 aa).

S-adenosyl-L-methionine contacts are provided by T144, G165, D187, and N235.

This sequence belongs to the methyltransferase superfamily. PrmA family.

It is found in the cytoplasm. The enzyme catalyses L-lysyl-[protein] + 3 S-adenosyl-L-methionine = N(6),N(6),N(6)-trimethyl-L-lysyl-[protein] + 3 S-adenosyl-L-homocysteine + 3 H(+). Methylates ribosomal protein L11. This Prochlorococcus marinus (strain MIT 9215) protein is Ribosomal protein L11 methyltransferase.